We begin with the raw amino-acid sequence, 506 residues long: Histidine ammonia-lyase (506 aa).

A cross-link (5-imidazolinone (Ala-Gly)) is located at residues 143–145 (ASG). Ser-144 carries the 2,3-didehydroalanine (Ser) modification.

It belongs to the PAL/histidase family. Contains an active site 4-methylidene-imidazol-5-one (MIO), which is formed autocatalytically by cyclization and dehydration of residues Ala-Ser-Gly.

It localises to the cytoplasm. It catalyses the reaction L-histidine = trans-urocanate + NH4(+). It participates in amino-acid degradation; L-histidine degradation into L-glutamate; N-formimidoyl-L-glutamate from L-histidine: step 1/3. The protein is Histidine ammonia-lyase of Salmonella paratyphi B (strain ATCC BAA-1250 / SPB7).